The sequence spans 546 residues: Probable protein kinase UbiB (546 aa).

The Protein kinase domain occupies 124-502 (DFDIQPLASA…HVRQSQSRYL (379 aa)). ATP-binding positions include 130 to 138 (LASASIAQV) and Lys-153. Residue Asp-288 is the Proton acceptor of the active site. 2 helical membrane-spanning segments follow: residues 501 to 521 (YLLGIGATLLLSGSFLLVNRP) and 522 to 542 (EWGLMPGWLMVGGVVVWLVGW).

It belongs to the ABC1 family. UbiB subfamily.

The protein resides in the cell inner membrane. Its pathway is cofactor biosynthesis; ubiquinone biosynthesis [regulation]. In terms of biological role, is probably a protein kinase regulator of UbiI activity which is involved in aerobic coenzyme Q (ubiquinone) biosynthesis. The protein is Probable protein kinase UbiB of Salmonella agona (strain SL483).